Reading from the N-terminus, the 93-residue chain is Co-chaperonin GroES (93 aa).

This sequence belongs to the GroES chaperonin family. As to quaternary structure, heptamer of 7 subunits arranged in a ring. Interacts with the chaperonin GroEL.

Its subcellular location is the cytoplasm. Together with the chaperonin GroEL, plays an essential role in assisting protein folding. The GroEL-GroES system forms a nano-cage that allows encapsulation of the non-native substrate proteins and provides a physical environment optimized to promote and accelerate protein folding. GroES binds to the apical surface of the GroEL ring, thereby capping the opening of the GroEL channel. In Streptococcus anginosus, this protein is Co-chaperonin GroES.